The sequence spans 189 residues: Molybdenum cofactor guanylyltransferase (189 aa).

Residues 12–14, lysine 24, aspartate 68, and aspartate 94 contribute to the GTP site; that span reads LAG. Residue aspartate 94 coordinates Mg(2+).

The protein belongs to the MobA family. As to quaternary structure, monomer. Mg(2+) serves as cofactor.

It is found in the cytoplasm. The catalysed reaction is Mo-molybdopterin + GTP + H(+) = Mo-molybdopterin guanine dinucleotide + diphosphate. Its function is as follows. Transfers a GMP moiety from GTP to Mo-molybdopterin (Mo-MPT) cofactor (Moco or molybdenum cofactor) to form Mo-molybdopterin guanine dinucleotide (Mo-MGD) cofactor. This is Molybdenum cofactor guanylyltransferase from Xanthomonas euvesicatoria pv. vesicatoria (strain 85-10) (Xanthomonas campestris pv. vesicatoria).